The primary structure comprises 283 residues: D-alanine aminotransferase (283 aa).

A substrate-binding site is contributed by Tyr-31. Arg-50 provides a ligand contact to pyridoxal 5'-phosphate. Residues Arg-98 and His-100 each coordinate substrate. The active-site Proton acceptor is the Lys-144. At Lys-144 the chain carries N6-(pyridoxal phosphate)lysine. Glu-176 provides a ligand contact to pyridoxal 5'-phosphate.

The protein belongs to the class-IV pyridoxal-phosphate-dependent aminotransferase family. As to quaternary structure, homodimer. It depends on pyridoxal 5'-phosphate as a cofactor.

The catalysed reaction is D-alanine + 2-oxoglutarate = D-glutamate + pyruvate. Acts on the D-isomers of alanine, leucine, aspartate, glutamate, aminobutyrate, norvaline and asparagine. The enzyme transfers an amino group from a substrate D-amino acid to the pyridoxal phosphate cofactor to form pyridoxamine and an alpha-keto acid in the first half-reaction. The second half-reaction is the reverse of the first, transferring the amino group from the pyridoxamine to a second alpha-keto acid to form the product D-amino acid via a ping-pong mechanism. This is an important process in the formation of D-alanine and D-glutamate, which are essential bacterial cell wall components. This Bacillus licheniformis protein is D-alanine aminotransferase (dat).